Reading from the N-terminus, the 322-residue chain is Pantothenate kinase (322 aa).

Position 100–107 (100–107) interacts with ATP; the sequence is GSVAVGKS.

The protein belongs to the prokaryotic pantothenate kinase family.

The protein resides in the cytoplasm. It carries out the reaction (R)-pantothenate + ATP = (R)-4'-phosphopantothenate + ADP + H(+). It functions in the pathway cofactor biosynthesis; coenzyme A biosynthesis; CoA from (R)-pantothenate: step 1/5. This is Pantothenate kinase from Brucella abortus (strain 2308).